The following is a 689-amino-acid chain: UvrABC system protein B (689 aa).

A disordered region spans residues Met1 to Asp26. A Helicase ATP-binding domain is found at Ala40 to Glu422. An ATP-binding site is contributed by Gly53–Thr60. A Beta-hairpin motif is present at residues Tyr106–Ile129. The 163-residue stretch at Gln443–Val605 folds into the Helicase C-terminal domain. The region spanning Ala632–Ala667 is the UVR domain. The segment at Phe668–Trp689 is disordered.

It belongs to the UvrB family. In terms of assembly, forms a heterotetramer with UvrA during the search for lesions. Interacts with UvrC in an incision complex.

The protein localises to the cytoplasm. The UvrABC repair system catalyzes the recognition and processing of DNA lesions. A damage recognition complex composed of 2 UvrA and 2 UvrB subunits scans DNA for abnormalities. Upon binding of the UvrA(2)B(2) complex to a putative damaged site, the DNA wraps around one UvrB monomer. DNA wrap is dependent on ATP binding by UvrB and probably causes local melting of the DNA helix, facilitating insertion of UvrB beta-hairpin between the DNA strands. Then UvrB probes one DNA strand for the presence of a lesion. If a lesion is found the UvrA subunits dissociate and the UvrB-DNA preincision complex is formed. This complex is subsequently bound by UvrC and the second UvrB is released. If no lesion is found, the DNA wraps around the other UvrB subunit that will check the other stand for damage. This is UvrABC system protein B from Halobacterium salinarum (strain ATCC 700922 / JCM 11081 / NRC-1) (Halobacterium halobium).